The chain runs to 321 residues: 4-dihydromethyl-trisporate dehydrogenase (321 aa).

Catalysis depends on Tyr51, which acts as the Proton donor. His113 provides a ligand contact to substrate.

It belongs to the aldo/keto reductase family.

It functions in the pathway pheromone biosynthesis; trisporate biosynthesis. Its function is as follows. Catalyzes the NADP-dependent oxidation of (+) mating-type specific precursor 4-dihydromethyl-trisporate to methyl-trisporate. The protein is 4-dihydromethyl-trisporate dehydrogenase (tdh) of Mucor mucedo (Common pinmould).